The chain runs to 124 residues: Aspartate 1-decarboxylase (124 aa).

Residue Ser25 is the Schiff-base intermediate with substrate; via pyruvic acid of the active site. Pyruvic acid (Ser) is present on Ser25. A substrate-binding site is contributed by Thr57. Catalysis depends on Tyr58, which acts as the Proton donor. Position 73–75 (73–75 (GAA)) interacts with substrate.

This sequence belongs to the PanD family. Heterooctamer of four alpha and four beta subunits. It depends on pyruvate as a cofactor. In terms of processing, is synthesized initially as an inactive proenzyme, which is activated by self-cleavage at a specific serine bond to produce a beta-subunit with a hydroxyl group at its C-terminus and an alpha-subunit with a pyruvoyl group at its N-terminus.

It localises to the cytoplasm. The enzyme catalyses L-aspartate + H(+) = beta-alanine + CO2. Its pathway is cofactor biosynthesis; (R)-pantothenate biosynthesis; beta-alanine from L-aspartate: step 1/1. Its function is as follows. Catalyzes the pyruvoyl-dependent decarboxylation of aspartate to produce beta-alanine. This is Aspartate 1-decarboxylase from Clostridium botulinum (strain Alaska E43 / Type E3).